A 1388-amino-acid chain; its full sequence is DNA-directed RNA polymerase subunit beta (1388 aa).

Belongs to the RNA polymerase beta chain family. The RNAP catalytic core consists of 2 alpha, 1 beta, 1 beta' and 1 omega subunit. When a sigma factor is associated with the core the holoenzyme is formed, which can initiate transcription.

The catalysed reaction is RNA(n) + a ribonucleoside 5'-triphosphate = RNA(n+1) + diphosphate. Functionally, DNA-dependent RNA polymerase catalyzes the transcription of DNA into RNA using the four ribonucleoside triphosphates as substrates. The polypeptide is DNA-directed RNA polymerase subunit beta (Stenotrophomonas maltophilia (strain K279a)).